The primary structure comprises 125 residues: MDHKPLLQERPPAYNLEAGQGDYACGPHGYGAIPAAPPPPPYPYLVTGIPTHHPRVYNIHSRTVTRYPANSIVVVGGCPVCRVGVLEDCFTFLGIFLAIILFPFGFICCFALRKRRCPNCGATFA.

2 consecutive transmembrane segments (helical) span residues 67–86 (YPAN…VGVL) and 92–112 (FLGI…CFAL).

Belongs to the BRI3 family. In terms of assembly, interacts with BRI3BP. Interacts with MGAT1 and IFITM3. As to quaternary structure, interacts with BRI3BP, MGAT1 and IFITM3; the interactions are weaker than with isoform 1.

It localises to the lysosome membrane. The protein localises to the cytoplasm. Its subcellular location is the perinuclear region. The protein resides in the nucleus. Participates in tumor necrosis factor-alpha (TNF)-induced cell death. May be a target of Wnt/beta-catenin signaling in the liver. In Homo sapiens (Human), this protein is Membrane protein BRI3 (BRI3).